Reading from the N-terminus, the 308-residue chain is Inactive C-alpha-formylglycine-generating enzyme 2 (308 aa).

Residues 1–33 (MRSEFWFPSMGSLLPPVLLLWLLSCPRLQLGHA) form the signal peptide. Cysteine 163 and cysteine 297 are joined by a disulfide. Asparagine 198 is a glycosylation site (N-linked (GlcNAc...) asparagine). Ca(2+)-binding residues include asparagine 201, leucine 202, aspartate 215, phenylalanine 217, aspartate 236, glycine 239, valine 241, and glutamate 243. The segment covering 281 to 291 (RMGNTPDSASD) has biased composition (polar residues). Positions 281 to 308 (RMGNTPDSASDNLGFRCASSAGRPKEDL) are disordered. Positions 305-308 (KEDL) match the Non-canonical ER retention motif motif.

It belongs to the sulfatase-modifying factor family. In terms of assembly, homodimer and heterodimer with SUMF1.

The protein resides in the endoplasmic reticulum lumen. Lacks formylglycine generating activity and is unable to convert newly synthesized inactive sulfatases to their active form. Inhibits the activation of sulfatases by SUMF1. This is Inactive C-alpha-formylglycine-generating enzyme 2 from Mus musculus (Mouse).